Reading from the N-terminus, the 1054-residue chain is NACHT, LRR and PYD domains-containing protein 12 (1054 aa).

Positions 1 to 95 (MLPSTARDGL…WERGQGEDLV (95 aa)) constitute a Pyrin domain. An FISNA domain is found at 129 to 201 (YKDYVRRKFQ…SPIQMETLFE (73 aa)). The 318-residue stretch at 211–528 (HTVVLQGAAG…EFFAAMYCAL (318 aa)) folds into the NACHT domain. Position 217 to 224 (217 to 224 (GAAGMGKS)) interacts with ATP. LRR repeat units lie at residues 821–841 (YLVE…KLLC), 850–871 (RLRT…DLAS), 878–899 (SLLE…LLCE), 907–928 (KLQT…GIAS), 935–955 (CLQE…QLLG), 964–985 (RLQK…DLSS), 992–1013 (TLHE…LLCK), and 1021–1042 (KLRV…RMAA).

Belongs to the NLRP family. Interacts (via pyrin domain) with ASC. Interacts (via pyrin domain) with FAF1 (via UBA domain). Interacts with MAP3K14; this interaction promotes proteasomal degradation of MAP3K14. Interacts with NOD2; this interaction promotes degradation of NOD2 through the ubiquitin-proteasome pathway. Interacts with HSPA1A and HSPA8. Interacts with HSP90AA1. Interacts with TRIM25; this interaction inhibits RIGI-mediated signaling pathway. In terms of tissue distribution, mainly expressed in dendritic cells (DCs) and neutrophils.

Its subcellular location is the cytoplasm. In terms of biological role, plays an essential role as an potent mitigator of inflammation. Primarily expressed in dendritic cells and macrophages, inhibits both canonical and non-canonical NF-kappa-B and ERK activation pathways. Functions as a negative regulator of NOD2 by targeting it to degradation via the proteasome pathway. In turn, promotes bacterial tolerance. Also inhibits the RIGI-mediated immune signaling against RNA viruses by reducing the E3 ubiquitin ligase TRIM25-mediated 'Lys-63'-linked RIGI activation but enhancing the E3 ubiquitin ligase RNF125-mediated 'Lys-48'-linked RIGI degradation. Also acts as a negative regulator of inflammatory response to mitigate obesity and obesity-associated diseases in adipose tissue. The chain is NACHT, LRR and PYD domains-containing protein 12 (Nlrp12) from Mus musculus (Mouse).